The primary structure comprises 186 residues: Peptide deformylase (186 aa).

The Fe cation site is built by C113 and H156. E157 is a catalytic residue. Residue H160 participates in Fe cation binding.

The protein belongs to the polypeptide deformylase family. Fe(2+) serves as cofactor.

The enzyme catalyses N-terminal N-formyl-L-methionyl-[peptide] + H2O = N-terminal L-methionyl-[peptide] + formate. Its function is as follows. Removes the formyl group from the N-terminal Met of newly synthesized proteins. Requires at least a dipeptide for an efficient rate of reaction. N-terminal L-methionine is a prerequisite for activity but the enzyme has broad specificity at other positions. This is Peptide deformylase from Lactiplantibacillus plantarum (strain ATCC BAA-793 / NCIMB 8826 / WCFS1) (Lactobacillus plantarum).